We begin with the raw amino-acid sequence, 188 residues long: UPF0200 protein M1627_1244 (188 aa).

15-22 is an ATP binding site; it reads GMPGSGKS.

This sequence belongs to the UPF0200 family.

The polypeptide is UPF0200 protein M1627_1244 (Saccharolobus islandicus (strain M.16.27) (Sulfolobus islandicus)).